Reading from the N-terminus, the 84-residue chain is Beta-defensin 119 (84 aa).

The N-terminal stretch at 1–21 is a signal peptide; that stretch reads MKLLYLFLAILLAIEEPVISG. 2 cysteine pairs are disulfide-bonded: C35/C49 and C39/C56.

This sequence belongs to the beta-defensin family.

The protein localises to the secreted. Has antibacterial activity. This chain is Beta-defensin 119 (DEFB119), found in Pan troglodytes (Chimpanzee).